The sequence spans 290 residues: uncharacterized protein (290 aa).

Disordered stretches follow at residues 17-91 (QTIS…EKNS) and 220-259 (DKASEPINGEEKEEGEKDGNAEQGKQKEVQDEQEEVQMPN). Over residues 40–50 (NITTHLSTGNL) the composition is skewed to polar residues. Basic residues predominate over residues 66-83 (STKKGKRVSKPGTKKKEK). Residues 233–249 (EGEKDGNAEQGKQKEVQ) are compositionally biased toward basic and acidic residues.

This is an uncharacterized protein from Saccharomyces cerevisiae (strain ATCC 204508 / S288c) (Baker's yeast).